We begin with the raw amino-acid sequence, 86 residues long: Small ribosomal subunit protein uS15 (86 aa).

The protein belongs to the universal ribosomal protein uS15 family. In terms of assembly, part of the 30S ribosomal subunit. Forms a bridge to the 50S subunit in the 70S ribosome, contacting the 23S rRNA.

One of the primary rRNA binding proteins, it binds directly to 16S rRNA where it helps nucleate assembly of the platform of the 30S subunit by binding and bridging several RNA helices of the 16S rRNA. Functionally, forms an intersubunit bridge (bridge B4) with the 23S rRNA of the 50S subunit in the ribosome. The chain is Small ribosomal subunit protein uS15 from Mycoplasma pneumoniae (strain ATCC 29342 / M129 / Subtype 1) (Mycoplasmoides pneumoniae).